A 223-amino-acid polypeptide reads, in one-letter code: Ribose-5-phosphate isomerase A (223 aa).

Residues 32 to 35 (TGST), 85 to 88 (DGAD), and 98 to 101 (KGGG) contribute to the substrate site. The Proton acceptor role is filled by Glu107. A substrate-binding site is contributed by Lys125.

It belongs to the ribose 5-phosphate isomerase family. As to quaternary structure, homodimer.

The catalysed reaction is aldehydo-D-ribose 5-phosphate = D-ribulose 5-phosphate. It functions in the pathway carbohydrate degradation; pentose phosphate pathway; D-ribose 5-phosphate from D-ribulose 5-phosphate (non-oxidative stage): step 1/1. Catalyzes the reversible conversion of ribose-5-phosphate to ribulose 5-phosphate. This chain is Ribose-5-phosphate isomerase A, found in Pseudomonas syringae pv. tomato (strain ATCC BAA-871 / DC3000).